The chain runs to 146 residues: Hemoglobin subunit beta-S/F (146 aa).

Val-1 is subject to N-acetylvaline. One can recognise a Globin domain in the interval 2 to 146 (HLTDGEKNAI…VANALSHKYH (145 aa)). Ser-44 carries the post-translational modification Phosphoserine. Lys-59 bears the N6-acetyllysine mark. His-63 serves as a coordination point for heme b. Lys-82 is modified (N6-acetyllysine). Residue His-92 participates in heme b binding. Cys-93 is modified (S-nitrosocysteine). At Lys-144 the chain carries N6-acetyllysine.

Belongs to the globin family. As to quaternary structure, heterotetramer of two alpha chains and two beta chains. Red blood cells.

In terms of biological role, involved in oxygen transport from the lung to the various peripheral tissues. This Urocitellus townsendii (Townsend's ground squirrel) protein is Hemoglobin subunit beta-S/F.